The following is a 608-amino-acid chain: Probable adenylate kinase 5, chloroplastic (608 aa).

Residues 1–20 (MAASSSSSSPAAASAPFAAP) show a composition bias toward low complexity. Residues 1-44 (MAASSSSSSPAAASAPFAAPGPHRRPGLALRPSPPTPPSSSLSC) form a disordered region. A chloroplast-targeting transit peptide spans 1–75 (MAASSSSSSP…GPRGMGLRCR (75 aa)). Position 99–104 (99–104 (ASGKGT)) interacts with ATP. Positions 119–148 (STGDLLRAEVSSGTEIGKKAKEYMDNGMLV) are NMP. AMP contacts are provided by residues Thr-120, Arg-125, 146 to 148 (MLV), 175 to 178 (GYPR), and Gln-182. Residues Arg-209, Arg-213, and 222–223 (IY) each bind ATP. The tract at residues 212 to 245 (GRRLDPETGKIYHIKNFPPENDEVSARLVTRSDD) is LID. The AMP site is built by Arg-242 and Arg-253.

This sequence belongs to the adenylate kinase family.

It is found in the plastid. It localises to the chloroplast. It carries out the reaction AMP + ATP = 2 ADP. Catalyzes the reversible transfer of the terminal phosphate group between ATP and AMP. Plays an important role in cellular energy homeostasis and in adenine nucleotide metabolism. The protein is Probable adenylate kinase 5, chloroplastic of Oryza sativa subsp. japonica (Rice).